The sequence spans 538 residues: Ribulokinase 1 (538 aa).

Belongs to the ribulokinase family.

It carries out the reaction D-ribulose + ATP = D-ribulose 5-phosphate + ADP + H(+). The enzyme catalyses L-ribulose + ATP = L-ribulose 5-phosphate + ADP + H(+). The protein operates within carbohydrate degradation; L-arabinose degradation via L-ribulose; D-xylulose 5-phosphate from L-arabinose (bacterial route): step 2/3. This chain is Ribulokinase 1, found in Staphylococcus saprophyticus subsp. saprophyticus (strain ATCC 15305 / DSM 20229 / NCIMB 8711 / NCTC 7292 / S-41).